We begin with the raw amino-acid sequence, 108 residues long: UPF0251 protein PF0620 (108 aa).

It belongs to the UPF0251 family.

The sequence is that of UPF0251 protein PF0620 from Pyrococcus furiosus (strain ATCC 43587 / DSM 3638 / JCM 8422 / Vc1).